We begin with the raw amino-acid sequence, 103 residues long: Large ribosomal subunit protein bL21 (103 aa).

It belongs to the bacterial ribosomal protein bL21 family. In terms of assembly, part of the 50S ribosomal subunit. Contacts protein L20.

Its function is as follows. This protein binds to 23S rRNA in the presence of protein L20. The polypeptide is Large ribosomal subunit protein bL21 (Clostridioides difficile (strain 630) (Peptoclostridium difficile)).